The sequence spans 86 residues: Progonadoliberin-2 (86 aa).

The N-terminal stretch at 1 to 24 (MVSVCRLLLVAALLLCLQAQLSFS) is a signal peptide. A Pyrrolidone carboxylic acid modification is found at Gln25. Residue Gly34 is modified to Glycine amide.

This sequence belongs to the GnRH family.

The protein resides in the secreted. Functionally, stimulates the secretion of gonadotropins. The sequence is that of Progonadoliberin-2 (gnrh2) from Clarias gariepinus (North African catfish).